Reading from the N-terminus, the 188-residue chain is Elongation factor P (188 aa).

Position 34 is an N6-(3,6-diaminohexanoyl)-5-hydroxylysine (Lys34).

It belongs to the elongation factor P family. In terms of processing, may be beta-lysylated on the epsilon-amino group of Lys-34 by the combined action of EpmA and EpmB, and then hydroxylated on the C5 position of the same residue by EpmC (if this protein is present). Lysylation is critical for the stimulatory effect of EF-P on peptide-bond formation. The lysylation moiety may extend toward the peptidyltransferase center and stabilize the terminal 3-CCA end of the tRNA. Hydroxylation of the C5 position on Lys-34 may allow additional potential stabilizing hydrogen-bond interactions with the P-tRNA.

It is found in the cytoplasm. It participates in protein biosynthesis; polypeptide chain elongation. Its function is as follows. Involved in peptide bond synthesis. Alleviates ribosome stalling that occurs when 3 or more consecutive Pro residues or the sequence PPG is present in a protein, possibly by augmenting the peptidyl transferase activity of the ribosome. Modification of Lys-34 is required for alleviation. This is Elongation factor P from Actinobacillus succinogenes (strain ATCC 55618 / DSM 22257 / CCUG 43843 / 130Z).